The sequence spans 358 residues: Microbial Terpene synthase-like protein 13 (358 aa).

It belongs to the terpene synthase family.

Functionally, no terpene synthase activity detected in vitro. The sequence is that of Microbial Terpene synthase-like protein 13 from Selaginella moellendorffii (Spikemoss).